A 98-amino-acid chain; its full sequence is Flagellar hook-basal body complex protein FliE (98 aa).

Residues 22–56 (KTDNATGAGNTFTQMLDSMSDTQSNAQTSVSNLLT) are disordered. Residues 23–56 (TDNATGAGNTFTQMLDSMSDTQSNAQTSVSNLLT) show a composition bias toward polar residues.

This sequence belongs to the FliE family.

The protein resides in the bacterial flagellum basal body. This is Flagellar hook-basal body complex protein FliE from Listeria innocua serovar 6a (strain ATCC BAA-680 / CLIP 11262).